The primary structure comprises 502 residues: Glutamate dehydrogenase, mitochondrial (502 aa).

Position 96–98 (96–98 (HHR)) interacts with NAD(+). Residues Lys-102 and Lys-126 each coordinate substrate. NAD(+) is bound at residue Asp-131. The active site involves Lys-138. Residue Ser-394 participates in substrate binding.

The protein belongs to the Glu/Leu/Phe/Val dehydrogenases family. As to quaternary structure, homohexamer.

It is found in the mitochondrion matrix. It catalyses the reaction L-glutamate + NAD(+) + H2O = 2-oxoglutarate + NH4(+) + NADH + H(+). The catalysed reaction is L-glutamate + NADP(+) + H2O = 2-oxoglutarate + NH4(+) + NADPH + H(+). With respect to regulation, subject to allosteric regulation. Activated by AMP and ADP. This is Glutamate dehydrogenase, mitochondrial (gluD) from Dictyostelium discoideum (Social amoeba).